We begin with the raw amino-acid sequence, 287 residues long: Elongation factor Ts (287 aa).

Residues 80 to 83 are involved in Mg(2+) ion dislocation from EF-Tu; it reads TDFL.

This sequence belongs to the EF-Ts family.

It is found in the cytoplasm. In terms of biological role, associates with the EF-Tu.GDP complex and induces the exchange of GDP to GTP. It remains bound to the aminoacyl-tRNA.EF-Tu.GTP complex up to the GTP hydrolysis stage on the ribosome. This Pseudomonas entomophila (strain L48) protein is Elongation factor Ts.